The sequence spans 241 residues: tRNA (guanine-N(7)-)-methyltransferase B (241 aa).

Gly61, Glu84, Arg86, Asn117, Ala118, and Leu137 together coordinate S-adenosyl-L-methionine. Asp140 is a catalytic residue. The interval 141 to 149 (PHFKKTKHK) is alphaC helix. S-adenosyl-L-methionine contacts are provided by Thr215 and Glu217. The interval 215 to 223 (TEEGKKVQR) is alpha6 helix.

Belongs to the class I-like SAM-binding methyltransferase superfamily. TrmB family. Catalytic component of the METTL1-WDR4 complex, composed of mettl1 and wdr4.

The protein resides in the nucleus. It catalyses the reaction guanosine(46) in tRNA + S-adenosyl-L-methionine = N(7)-methylguanosine(46) in tRNA + S-adenosyl-L-homocysteine. It carries out the reaction a guanosine in mRNA + S-adenosyl-L-methionine = an N(7)-methylguanosine in mRNA + S-adenosyl-L-homocysteine. The enzyme catalyses a guanosine in miRNA + S-adenosyl-L-methionine = an N(7)-methylguanosine in miRNA + S-adenosyl-L-homocysteine. It functions in the pathway tRNA modification; N(7)-methylguanine-tRNA biosynthesis. Its function is as follows. Catalytic component of METTL1-WDR4 methyltransferase complex that mediates the formation of N(7)-methylguanine in a subset of RNA species, such as tRNAs, mRNAs and microRNAs (miRNAs). Catalyzes the formation of N(7)-methylguanine at position 46 (m7G46) in a large subset of tRNAs that contain the 5'-RAGGU-3' motif within the variable loop. M7G46 interacts with C13-G22 in the D-loop to stabilize tRNA tertiary structure and protect tRNAs from decay. Also acts as a methyltransferase for a subset of internal N(7)-methylguanine in mRNAs. Internal N(7)-methylguanine methylation of mRNAs in response to stress promotes their relocalization to stress granules, thereby suppressing their translation. Also methylates a specific subset of miRNAs. In Xenopus tropicalis (Western clawed frog), this protein is tRNA (guanine-N(7)-)-methyltransferase B (mettl1-B).